The sequence spans 391 residues: Uroporphyrinogen decarboxylase, chloroplastic (391 aa).

Substrate contacts are provided by residues 71–75 (RQAGR), phenylalanine 90, serine 120, aspartate 121, tyrosine 198, serine 253, and histidine 368.

Belongs to the uroporphyrinogen decarboxylase family. In terms of assembly, homodimer.

It is found in the plastid. The protein localises to the chloroplast. It carries out the reaction uroporphyrinogen III + 4 H(+) = coproporphyrinogen III + 4 CO2. The protein operates within porphyrin-containing compound metabolism; protoporphyrin-IX biosynthesis; coproporphyrinogen-III from 5-aminolevulinate: step 4/4. Functionally, catalyzes the decarboxylation of four acetate groups of uroporphyrinogen-III to yield coproporphyrinogen-III. The chain is Uroporphyrinogen decarboxylase, chloroplastic (DCUP) from Nicotiana tabacum (Common tobacco).